The primary structure comprises 305 residues: Ribonuclease Z (305 aa).

The Zn(2+) site is built by His63, His65, Asp67, His68, His142, Asp209, and His267. The active-site Proton acceptor is the Asp67.

The protein belongs to the RNase Z family. In terms of assembly, homodimer. Zn(2+) serves as cofactor.

The enzyme catalyses Endonucleolytic cleavage of RNA, removing extra 3' nucleotides from tRNA precursor, generating 3' termini of tRNAs. A 3'-hydroxy group is left at the tRNA terminus and a 5'-phosphoryl group is left at the trailer molecule.. In terms of biological role, zinc phosphodiesterase, which displays some tRNA 3'-processing endonuclease activity. Probably involved in tRNA maturation, by removing a 3'-trailer from precursor tRNA. In Nocardia farcinica (strain IFM 10152), this protein is Ribonuclease Z.